The sequence spans 375 residues: Protein RecA (375 aa).

88–95 (GPESSGKT) is an ATP binding site.

It belongs to the RecA family.

It is found in the cytoplasm. Can catalyze the hydrolysis of ATP in the presence of single-stranded DNA, the ATP-dependent uptake of single-stranded DNA by duplex DNA, and the ATP-dependent hybridization of homologous single-stranded DNAs. It interacts with LexA causing its activation and leading to its autocatalytic cleavage. This chain is Protein RecA, found in Rhodopirellula baltica (strain DSM 10527 / NCIMB 13988 / SH1).